A 127-amino-acid polypeptide reads, in one-letter code: uncharacterized protein (127 aa).

A Phosphothreonine modification is found at Thr-30. The disordered stretch occupies residues 51–75 (APTYEQVLYPPASQKKTSNSTSEES). A Phosphoserine modification is found at Ser-63.

This is an uncharacterized protein from Mus musculus (Mouse).